The sequence spans 377 residues: uncharacterized protein (377 aa).

32–39 (GPINSGKT) provides a ligand contact to ATP.

Belongs to the archaeal ATPase family.

This is an uncharacterized protein from Methanocaldococcus jannaschii (strain ATCC 43067 / DSM 2661 / JAL-1 / JCM 10045 / NBRC 100440) (Methanococcus jannaschii).